An 891-amino-acid chain; its full sequence is Protein translocase subunit SecA 1 (891 aa).

ATP is bound by residues Q85, 103–107 (GEGKT), and D491. Residues C877, C879, C888, and C889 each coordinate Zn(2+).

Belongs to the SecA family. As to quaternary structure, monomer and homodimer. Part of the essential Sec protein translocation apparatus which comprises SecA, SecYEG and auxiliary proteins SecDF. Other proteins may also be involved. Zn(2+) serves as cofactor.

The protein localises to the cell membrane. It is found in the cytoplasm. The catalysed reaction is ATP + H2O + cellular proteinSide 1 = ADP + phosphate + cellular proteinSide 2.. Functionally, part of the Sec protein translocase complex. Interacts with the SecYEG preprotein conducting channel. Has a central role in coupling the hydrolysis of ATP to the transfer of proteins into and across the cell membrane, serving as an ATP-driven molecular motor driving the stepwise translocation of polypeptide chains across the membrane. The sequence is that of Protein translocase subunit SecA 1 from Clostridioides difficile (strain 630) (Peptoclostridium difficile).